The chain runs to 244 residues: MGDLFSLFWEVDPPPIPLNCAIPNQDYECRKDDSCGTIGNFLLWYFVIVFVLMFFSRASVWMSEDKKDEGSGTSTSVRKASKETSYKWQSKDGAWDPSQTMKKPKQNQLTPVTNSEVALVNAYLEQRRARRQSQFNEVNQNQHDSDTTECGSEESNSEASSWKESESEHHPSPDSIKRRKMAQRQRNLGSYQMSERHCLHCKAMRTNEWLVHHSQQKASVTPPMKGDSPEESSISDINTKFSKF.

The helical transmembrane segment at 35–55 (CGTIGNFLLWYFVIVFVLMFF) threads the bilayer. Disordered stretches follow at residues 65–112 (DKKD…LTPV), 132–191 (QSQF…LGSY), and 213–244 (HSQQ…FSKF). Over residues 80–94 (ASKETSYKWQSKDGA) the composition is skewed to basic and acidic residues. Composition is skewed to polar residues over residues 97–112 (PSQT…LTPV) and 132–142 (QSQFNEVNQNQ). Basic and acidic residues predominate over residues 161 to 176 (SWKESESEHHPSPDSI). The segment covering 231 to 244 (ESSISDINTKFSKF) has biased composition (polar residues).

The protein localises to the membrane. The polypeptide is Serine-rich single-pass membrane protein 1 (SSMEM1) (Macaca fascicularis (Crab-eating macaque)).